A 61-amino-acid chain; its full sequence is Probable tautomerase BA_5626/GBAA_5626/BAS5226 (61 aa).

Residue proline 2 is the Proton acceptor; via imino nitrogen of the active site.

This sequence belongs to the 4-oxalocrotonate tautomerase family.

The polypeptide is Probable tautomerase BA_5626/GBAA_5626/BAS5226 (Bacillus anthracis).